A 284-amino-acid chain; its full sequence is Small ribosomal subunit protein uS2 (284 aa).

Belongs to the universal ribosomal protein uS2 family.

In Mycoplasma genitalium (strain ATCC 33530 / DSM 19775 / NCTC 10195 / G37) (Mycoplasmoides genitalium), this protein is Small ribosomal subunit protein uS2 (rpsB).